We begin with the raw amino-acid sequence, 426 residues long: 3-phosphoshikimate 1-carboxyvinyltransferase (426 aa).

3-phosphoshikimate-binding residues include Lys-22, Ser-23, and Arg-27. Lys-22 provides a ligand contact to phosphoenolpyruvate. 2 residues coordinate phosphoenolpyruvate: Gly-96 and Arg-124. 7 residues coordinate 3-phosphoshikimate: Ser-170, Ser-171, Gln-172, Ser-198, Asp-314, Asn-337, and Lys-341. A phosphoenolpyruvate-binding site is contributed by Gln-172. Asp-314 (proton acceptor) is an active-site residue. Phosphoenolpyruvate-binding residues include Arg-345, Arg-387, and Lys-412.

This sequence belongs to the EPSP synthase family. As to quaternary structure, monomer.

It localises to the cytoplasm. The enzyme catalyses 3-phosphoshikimate + phosphoenolpyruvate = 5-O-(1-carboxyvinyl)-3-phosphoshikimate + phosphate. It participates in metabolic intermediate biosynthesis; chorismate biosynthesis; chorismate from D-erythrose 4-phosphate and phosphoenolpyruvate: step 6/7. Functionally, catalyzes the transfer of the enolpyruvyl moiety of phosphoenolpyruvate (PEP) to the 5-hydroxyl of shikimate-3-phosphate (S3P) to produce enolpyruvyl shikimate-3-phosphate and inorganic phosphate. This Shewanella loihica (strain ATCC BAA-1088 / PV-4) protein is 3-phosphoshikimate 1-carboxyvinyltransferase.